Reading from the N-terminus, the 298-residue chain is Tyrosine recombinase XerC (298 aa).

One can recognise a Core-binding (CB) domain in the interval 1-84 (MNHIQDAFLN…TLRTFYEYWM (84 aa)). The region spanning 105–286 (YLPQFFYEEE…SNQQLRKVYL (182 aa)) is the Tyr recombinase domain. Active-site residues include Arg145, Lys169, His238, Arg241, and His264. Catalysis depends on Tyr273, which acts as the O-(3'-phospho-DNA)-tyrosine intermediate.

The protein belongs to the 'phage' integrase family. XerC subfamily. As to quaternary structure, forms a cyclic heterotetrameric complex composed of two molecules of XerC and two molecules of XerD.

Its subcellular location is the cytoplasm. Site-specific tyrosine recombinase, which acts by catalyzing the cutting and rejoining of the recombining DNA molecules. The XerC-XerD complex is essential to convert dimers of the bacterial chromosome into monomers to permit their segregation at cell division. It also contributes to the segregational stability of plasmids. This chain is Tyrosine recombinase XerC, found in Staphylococcus aureus (strain USA300).